The primary structure comprises 361 residues: Probable cinnamyl alcohol dehydrogenase (361 aa).

Residue cysteine 48 participates in Zn(2+) binding. Threonine 50 is a binding site for NADP(+). Positions 70, 71, 101, 104, 107, 115, and 164 each coordinate Zn(2+). NADP(+) contacts are provided by residues threonine 168, 189–194, 212–217, threonine 252, glycine 276, and 299–301; these read GLGGVG, SSSDKK, and SFI.

Belongs to the zinc-containing alcohol dehydrogenase family. Homodimer. Zn(2+) is required as a cofactor.

It catalyses the reaction (E)-cinnamyl alcohol + NADP(+) = (E)-cinnamaldehyde + NADPH + H(+). The catalysed reaction is (E)-coniferol + NADP(+) = (E)-coniferaldehyde + NADPH + H(+). The enzyme catalyses (E)-sinapyl alcohol + NADP(+) = (E)-sinapaldehyde + NADPH + H(+). It carries out the reaction (E)-4-coumaroyl alcohol + NADP(+) = (E)-4-coumaraldehyde + NADPH + H(+). It catalyses the reaction (E)-caffeyl alcohol + NADP(+) = (E)-caffeyl aldehyde + NADPH + H(+). Its pathway is aromatic compound metabolism; phenylpropanoid biosynthesis. Functionally, involved in lignin biosynthesis. Catalyzes the final step specific for the production of lignin monomers. Catalyzes the NADPH-dependent reduction of coniferaldehyde, 5-hydroxyconiferaldehyde, sinapaldehyde, 4-coumaraldehyde and caffeyl aldehyde to their respective alcohols. This is Probable cinnamyl alcohol dehydrogenase from Lolium perenne (Perennial ryegrass).